A 322-amino-acid polypeptide reads, in one-letter code: MAVVSTSLASQITNPNSAVSTQFSGLRRSFLKLENSVSTQSSFFQNVDSHLRLSSSSRRCPRGVVAMAGSGKFFVGGNWKCNGTKESITKLVSDLNSATLEADVDVVVAPPFVYIDQVKSSLTGRVEISAQNCWIGKGGAFTGEISVEQLKDLGCQWVILGHSERRHVIGEQNEFIGKKAAYALNQGVGVIACIGELLEEREAGKTFDVCYQQLKAFADALPSWDNVVVAYEPVWAIGTGKVASPDQAQEVHVAVRDWLKKNVSEEVASKTRIIYGGSVNGGNCAELAKQEDIDGFLVGGASLKGPEFATIVNSVTAKKVAA.

A chloroplast-targeting transit peptide spans 1–67 (MAVVSTSLAS…RRCPRGVVAM (67 aa)). The substrate site is built by Asn78 and Lys80. His162 acts as the Electrophile in catalysis. Residue Glu232 is the Proton acceptor of the active site.

This sequence belongs to the triosephosphate isomerase family. In terms of assembly, homodimer.

It localises to the plastid. It is found in the chloroplast. The catalysed reaction is D-glyceraldehyde 3-phosphate = dihydroxyacetone phosphate. The protein operates within carbohydrate biosynthesis; Calvin cycle. The sequence is that of Triosephosphate isomerase, chloroplastic (TPIP1) from Spinacia oleracea (Spinach).